The primary structure comprises 141 residues: Large ribosomal subunit protein uL11 (141 aa).

It belongs to the universal ribosomal protein uL11 family. In terms of assembly, part of the ribosomal stalk of the 50S ribosomal subunit. Interacts with L10 and the large rRNA to form the base of the stalk. L10 forms an elongated spine to which L12 dimers bind in a sequential fashion forming a multimeric L10(L12)X complex. Post-translationally, one or more lysine residues are methylated.

Its function is as follows. Forms part of the ribosomal stalk which helps the ribosome interact with GTP-bound translation factors. The polypeptide is Large ribosomal subunit protein uL11 (Campylobacter lari (strain RM2100 / D67 / ATCC BAA-1060)).